Here is a 506-residue protein sequence, read N- to C-terminus: COP9 signalosome complex subunit 2 (506 aa).

Residues 252–420 (SEENWEEAQS…GTVVVESASD (169 aa)) form the PCI domain. Basic residues predominate over residues 482–491 (SGHRFRRGGK). A disordered region spans residues 482–506 (SGHRFRRGGKGSKAGGGLGMKTGLF). A compositionally biased stretch (gly residues) spans 492–506 (GSKAGGGLGMKTGLF).

Belongs to the CSN2 family. In terms of assembly, component of the COP9 signalosome (CSN) complex.

The protein resides in the cytoplasm. It is found in the nucleus. Its function is as follows. Component of the COP9 signalosome (CSN) complex that acts as an regulator of the ubiquitin (Ubl) conjugation pathway by mediating the deneddylation of the cullin subunit of SCF-type E3 ubiquitin-protein ligase complexes. The CSN complex seems to link protein degradation to sexual development. Required for fruit body formation. This is COP9 signalosome complex subunit 2 (csnB) from Emericella nidulans (strain FGSC A4 / ATCC 38163 / CBS 112.46 / NRRL 194 / M139) (Aspergillus nidulans).